A 415-amino-acid chain; its full sequence is MSFLKTSDPAVYNAIMQETTRLKETIDLIASENYTSKAVLEAQGSVFTNKYAEGYPGKRYYAGCEYADAIEELAIDRAKTLFHAEHANVQPHSGAQANMAAYFAMVKPGDTIMGLTLSHGGHLTHGSKANFTGKLYHVIEYGLNAETERIDYDNLEKLALEHRPRLIVTGASAYPRILDFERFRAICDKVDAKLMVDIAHIAGLVAAGLHPSPVPYADVVTSTSHKTLRGPRGGFILCKEQYAKAIDQAVFPVIQGGPLMQVVAAKAVAFQEAMQPGFVTYQKKILENTQVMAEELRKLGLRLVSGGTDNHLVLVDLSPIGVNGYDAQLALRRAGIVINRNTVPFAENQTANVPAGIRLGCPAATSRGFGPAEIRQTVSWIGKILKNIGNEDIEKQVLAEVIHLCRKFPVPGIDA.

(6S)-5,6,7,8-tetrahydrofolate is bound by residues Leu117 and 121 to 123 (GHL). N6-(pyridoxal phosphate)lysine is present on Lys226.

This sequence belongs to the SHMT family. As to quaternary structure, homodimer. Requires pyridoxal 5'-phosphate as cofactor.

Its subcellular location is the cytoplasm. It carries out the reaction (6R)-5,10-methylene-5,6,7,8-tetrahydrofolate + glycine + H2O = (6S)-5,6,7,8-tetrahydrofolate + L-serine. It participates in one-carbon metabolism; tetrahydrofolate interconversion. It functions in the pathway amino-acid biosynthesis; glycine biosynthesis; glycine from L-serine: step 1/1. Functionally, catalyzes the reversible interconversion of serine and glycine with tetrahydrofolate (THF) serving as the one-carbon carrier. This reaction serves as the major source of one-carbon groups required for the biosynthesis of purines, thymidylate, methionine, and other important biomolecules. Also exhibits THF-independent aldolase activity toward beta-hydroxyamino acids, producing glycine and aldehydes, via a retro-aldol mechanism. In Dehalococcoides mccartyi (strain ATCC BAA-2266 / KCTC 15142 / 195) (Dehalococcoides ethenogenes (strain 195)), this protein is Serine hydroxymethyltransferase.